A 77-amino-acid chain; its full sequence is TSC22 domain family protein 3 (77 aa).

Met1 carries the N-acetylmethionine modification. Positions 19–40 are leucine-zipper; it reads LKEQIRELVEKNSQLERENTLL. Positions 41-77 are disordered; the sequence is KTLASPEQLEKFQSRLSPEEPAPETPEAPEAPGGSAV. Ser45 is subject to Phosphoserine. Low complexity predominate over residues 68–77; it reads APEAPGGSAV.

Belongs to the TSC-22/Dip/Bun family. As to quaternary structure, can form homodimers, however it is likely to function as a monomer. Interacts with AP1 and NFKB1. Interacts with MYOD1. Interacts with HDAC1; this interaction affects HDAC1 activity on MYOG promoter and thus inhibits MYOD1 transcriptional activity.

It is found in the cytoplasm. The protein resides in the nucleus. Functionally, protects T-cells from IL2 deprivation-induced apoptosis through the inhibition of FOXO3A transcriptional activity that leads to the down-regulation of the pro-apoptotic factor BCL2L11. In macrophages, plays a role in the anti-inflammatory and immunosuppressive effects of glucocorticoids and IL10. In T-cells, inhibits anti-CD3-induced NFKB1 nuclear translocation. In vitro, suppresses AP1 and NFKB1 DNA-binding activities. Inhibits myogenic differentiation and mediates anti-myogenic effects of glucocorticoids by binding and regulating MYOD1 and HDAC1 transcriptional activity resulting in reduced expression of MYOG. This chain is TSC22 domain family protein 3 (TSC22D3), found in Sus scrofa (Pig).